A 549-amino-acid chain; its full sequence is Lipase 1 (549 aa).

The first 15 residues, 1-15 (MELALALSLIASVAA), serve as a signal peptide directing secretion. A disulfide bridge links cysteine 75 with cysteine 112. The active-site Acyl-ester intermediate is the serine 224. Cysteine 283 and cysteine 292 are joined by a disulfide. Residue asparagine 329 is glycosylated (N-linked (GlcNAc...) asparagine). Catalysis depends on glutamate 356, which acts as the Charge relay system. Asparagine 366 is a glycosylation site (N-linked (GlcNAc...) asparagine). Histidine 464 acts as the Charge relay system in catalysis.

It belongs to the type-B carboxylesterase/lipase family.

The catalysed reaction is a triacylglycerol + H2O = a diacylglycerol + a fatty acid + H(+). The sequence is that of Lipase 1 (LIP1) from Diutina rugosa (Yeast).